A 186-amino-acid polypeptide reads, in one-letter code: Peptidoglycan-recognition protein SD (186 aa).

An N-terminal signal peptide occupies residues 1-18 (MTWIGLLIVGLTAIAVQG). The N-acetylmuramoyl-L-alanine amidase domain occupies 47–169 (AVIAHTAGGA…RQVSATKSPG (123 aa)). A disulfide bridge connects residues Cys57 and Cys63. Residue Asn181 is glycosylated (N-linked (GlcNAc...) asparagine).

Belongs to the N-acetylmuramoyl-L-alanine amidase 2 family. In terms of tissue distribution, in larvae, it is mainly expressed in fat body. Also expressed in uninduced hemocytes and mbn-2 cells.

Its subcellular location is the secreted. Functionally, peptidoglycan-recognition protein that plays a key role in innate immunity by binding to peptidoglycans (PGN) of Gram-positive bacteria and activating the Toll pathway. Has no activity against on Gram-negative bacteria and fungi. Shows some partial redundancy with PRPGP-SA in Gram-positive bacteria recognition. May act by activating the proteolytic cleavage of Spatzle and the subsequent activation of Toll pathway. Recognizes S.aureus PGN. This Drosophila melanogaster (Fruit fly) protein is Peptidoglycan-recognition protein SD (PGRP-SD).